A 675-amino-acid chain; its full sequence is Methionine--tRNA ligase (675 aa).

The short motif at 15-25 (PYANGPIHLGH) is the 'HIGH' region element. Positions 146, 149, 159, and 162 each coordinate Zn(2+). Positions 332 to 336 (KMSKS) match the 'KMSKS' region motif. Lys335 provides a ligand contact to ATP. Positions 573-675 (DFAKVDMRVA…SGAQPGMQVK (103 aa)) constitute a tRNA-binding domain.

The protein belongs to the class-I aminoacyl-tRNA synthetase family. MetG type 1 subfamily. As to quaternary structure, homodimer. The cofactor is Zn(2+).

The protein localises to the cytoplasm. The enzyme catalyses tRNA(Met) + L-methionine + ATP = L-methionyl-tRNA(Met) + AMP + diphosphate. In terms of biological role, is required not only for elongation of protein synthesis but also for the initiation of all mRNA translation through initiator tRNA(fMet) aminoacylation. The polypeptide is Methionine--tRNA ligase (Photorhabdus laumondii subsp. laumondii (strain DSM 15139 / CIP 105565 / TT01) (Photorhabdus luminescens subsp. laumondii)).